Reading from the N-terminus, the 336-residue chain is Aspartate--ammonia ligase (336 aa).

This sequence belongs to the class-II aminoacyl-tRNA synthetase family. AsnA subfamily.

The protein localises to the cytoplasm. The catalysed reaction is L-aspartate + NH4(+) + ATP = L-asparagine + AMP + diphosphate + H(+). Its pathway is amino-acid biosynthesis; L-asparagine biosynthesis; L-asparagine from L-aspartate (ammonia route): step 1/1. This Clostridium perfringens (strain ATCC 13124 / DSM 756 / JCM 1290 / NCIMB 6125 / NCTC 8237 / Type A) protein is Aspartate--ammonia ligase.